We begin with the raw amino-acid sequence, 604 residues long: Pescadillo homolog (604 aa).

Residues 275 to 299 (NSEPAGLIEDKEGEDNKESSKTDES) form a disordered region. Over residues 282–299 (IEDKEGEDNKESSKTDES) the composition is skewed to basic and acidic residues. The region spanning 337–427 (ECRSLFKNLK…IILPTEGYIV (91 aa)) is the BRCT domain. Disordered regions lie at residues 518 to 557 (KTFSNRTADNQPDVVDKSDTKEADDHMEDSHKQAEKDAAD) and 574 to 604 (IEINQERKKDKVNLLKKRKKNADSSASAKGR). Composition is skewed to basic and acidic residues over residues 531–557 (VVDKSDTKEADDHMEDSHKQAEKDAAD) and 577–586 (NQERKKDKVN).

Belongs to the pescadillo family.

It localises to the nucleus. Its subcellular location is the nucleolus. It is found in the nucleoplasm. In terms of biological role, required for maturation of ribosomal RNAs and formation of the large ribosomal subunit. The protein is Pescadillo homolog (PES) of Oryza sativa subsp. japonica (Rice).